A 217-amino-acid chain; its full sequence is N-(5'-phosphoribosyl)anthranilate isomerase (217 aa).

This sequence belongs to the TrpF family.

It catalyses the reaction N-(5-phospho-beta-D-ribosyl)anthranilate = 1-(2-carboxyphenylamino)-1-deoxy-D-ribulose 5-phosphate. It functions in the pathway amino-acid biosynthesis; L-tryptophan biosynthesis; L-tryptophan from chorismate: step 3/5. In Synechococcus sp. (strain ATCC 27144 / PCC 6301 / SAUG 1402/1) (Anacystis nidulans), this protein is N-(5'-phosphoribosyl)anthranilate isomerase.